The following is a 524-amino-acid chain: MSDNGELEDKPPAPPVRMSSTIFSTGGKDPLSANHSLKPLPSVPEEKKPRNKIISIFSGTEKGSKKKEKERPEISPPSDFEHTIHVGFDAVTGEFTGMPEQWARLLQTSNITKLEQKKNPQAVLDVLKFYDSNTVKQKYLSFTPPEKDGFPSGAPALNTKVSETSAVVTEEDDDDEEAAPPVIAPRPDHTKSIYTRSVIDPIPAPVGDSHVDSGAKSSDKQKKKTKMTDEEIMEKLRTIVSIGDPKKKYTRYEKIGQGASGTVFTATDVALGQEVAIKQINLQKQPKKELIINEILVMKELKNPNIVNFLDSYLVGDELFVVMEYLAGGSLTDVVTETCMDEAQIAAVCRECLQALEFLHANQVIHRDIKSDNVLLGMEGSVKLTDFGFCAQITPEQSKRSTMVGTPYWMAPEVVTRKAYGPKVDIWSLGIMAIEMVEGEPPYLNENPLRALYLIATNGTPELQNPEKLSPIFRDFLNRCLEMDVEKRGSAKELLQHPFLKLAKPLSSLTPLIMAAKEAMKSNR.

A disordered region spans residues 1–81 (MSDNGELEDK…PEISPPSDFE (81 aa)). At Ser2 the chain carries N-acetylserine. A phosphoserine mark is found at Ser2, Ser20, Ser55, and Ser58. Thr60 is subject to Phosphothreonine. Position 62 is an N6-acetyllysine (Lys62). Residue Ser64 is modified to Phosphoserine. Positions 67–81 (KEKERPEISPPSDFE) are enriched in basic and acidic residues. A GTPase-binding region spans residues 69 to 112 (KERPEISPPSDFEHTIHVGFDAVTGEFTGMPEQWARLLQTSNIT). An autoregulatory region region spans residues 69-137 (KERPEISPPS…KFYDSNTVKQ (69 aa)). Residues 74 to 87 (ISPPSDFEHTIHVG) form the CRIB domain. A linker region spans residues 88 to 248 (FDAVTGEFTG…IVSIGDPKKK (161 aa)). Position 128 is an N6-acetyllysine (Lys128). Position 134 is a phosphothreonine (Thr134). Tyr139 is modified (phosphotyrosine). Ser141 carries the phosphoserine modification. A Phosphothreonine modification is found at Thr143. Ser152 is modified (phosphoserine). Phosphothreonine is present on residues Thr159 and Thr169. A compositionally biased stretch (acidic residues) spans 169–178 (TEEDDDDEEA). Residues 169–188 (TEEDDDDEEAAPPVIAPRPD) form a disordered region. Ser197 carries the post-translational modification Phosphoserine. Residues 204–228 (APVGDSHVDSGAKSSDKQKKKTKMT) form a disordered region. Residues 209-228 (SHVDSGAKSSDKQKKKTKMT) show a composition bias toward basic and acidic residues. The Nuclear localization signal motif lies at 245–251 (PKKKYTR). One can recognise a Protein kinase domain in the interval 249 to 500 (YTRYEKIGQG…AKELLQHPFL (252 aa)). Residues 255–263 (IGQGASGTV) and Lys278 each bind ATP. Asp368 acts as the Proton acceptor in catalysis. Phosphothreonine; by autocatalysis is present on Thr402.

As to quaternary structure, interacts tightly with GTP-bound but not GDP-bound CDC42/p21 and RAC1. Interacts with SH3MD4. Interacts with SCRIB. Interacts with ARHGEF7 and GIT1. PAK-2p34 interacts with ARHGAP10. Interacts with RAC1. Full-length PAK2 is autophosphorylated when activated by CDC42/p21. Following cleavage, both peptides, PAK-2p27 and PAK-2p34, become highly autophosphorylated. Autophosphorylation of PAK-2p27 can occur in the absence of any effectors and is dependent on phosphorylation of Thr-402, because PAK-2p27 is acting as an exogenous substrate. In terms of processing, during apoptosis proteolytically cleaved by caspase-3 or caspase-3-like proteases to yield active PAK-2p34. Post-translationally, ubiquitinated, leading to its proteasomal degradation.

Its subcellular location is the cytoplasm. It is found in the nucleus. The protein resides in the perinuclear region. The protein localises to the membrane. The catalysed reaction is L-seryl-[protein] + ATP = O-phospho-L-seryl-[protein] + ADP + H(+). The enzyme catalyses L-threonyl-[protein] + ATP = O-phospho-L-threonyl-[protein] + ADP + H(+). Activated by binding small G proteins. Binding of GTP-bound CDC42 or RAC1 to the autoregulatory region releases monomers from the autoinhibited dimer, enables phosphorylation of Thr-402 and allows the kinase domain to adopt an active structure. Following caspase cleavage, autophosphorylated PAK-2p34 is constitutively active. Its function is as follows. Serine/threonine protein kinase that plays a role in a variety of different signaling pathways including cytoskeleton regulation, cell motility, cell cycle progression, apoptosis or proliferation. Acts as a downstream effector of the small GTPases CDC42 and RAC1. Activation by the binding of active CDC42 and RAC1 results in a conformational change and a subsequent autophosphorylation on several serine and/or threonine residues. Full-length PAK2 stimulates cell survival and cell growth. Phosphorylates MAPK4 and MAPK6 and activates the downstream target MAPKAPK5, a regulator of F-actin polymerization and cell migration. Phosphorylates JUN and plays an important role in EGF-induced cell proliferation. Phosphorylates many other substrates including histone H4 to promote assembly of H3.3 and H4 into nucleosomes, BAD, ribosomal protein S6, or MBP. Phosphorylates CASP7, thereby preventing its activity. Additionally, associates with ARHGEF7 and GIT1 to perform kinase-independent functions such as spindle orientation control during mitosis. On the other hand, apoptotic stimuli such as DNA damage lead to caspase-mediated cleavage of PAK2, generating PAK-2p34, an active p34 fragment that translocates to the nucleus and promotes cellular apoptosis involving the JNK signaling pathway. Caspase-activated PAK2 phosphorylates MKNK1 and reduces cellular translation. This chain is Serine/threonine-protein kinase PAK 2 (PAK2), found in Oryctolagus cuniculus (Rabbit).